Here is a 139-residue protein sequence, read N- to C-terminus: Transcription antitermination protein NusB (139 aa).

The protein belongs to the NusB family.

In terms of biological role, involved in transcription antitermination. Required for transcription of ribosomal RNA (rRNA) genes. Binds specifically to the boxA antiterminator sequence of the ribosomal RNA (rrn) operons. The chain is Transcription antitermination protein NusB from Baumannia cicadellinicola subsp. Homalodisca coagulata.